The chain runs to 288 residues: Extracellular ribonuclease (288 aa).

Positions 1-26 (MTKKAWFLPLVCVLLISGWLAPAASA) are cleaved as a signal peptide.

It is found in the secreted. In terms of biological role, mg(2+)-activated ribonuclease which hydrolyzes RNA apparently nonspecifically into oligonucleotides with 5'-terminal phosphate. This chain is Extracellular ribonuclease (bsn), found in Bacillus subtilis (strain 168).